The following is a 126-amino-acid chain: Methylglyoxal synthase (126 aa).

The MGS-like domain maps to 1-126 (MADRKCLALI…AEQLIDFRRN (126 aa)). Residues His12, Lys16, 38–41 (TGTT), and 59–60 (SG) each bind substrate. Catalysis depends on Asp65, which acts as the Proton donor/acceptor. His92 serves as a coordination point for substrate.

The protein belongs to the methylglyoxal synthase family.

It carries out the reaction dihydroxyacetone phosphate = methylglyoxal + phosphate. Catalyzes the formation of methylglyoxal from dihydroxyacetone phosphate. The polypeptide is Methylglyoxal synthase (Rhizobium meliloti (strain 1021) (Ensifer meliloti)).